Reading from the N-terminus, the 364-residue chain is Lytic cellulose monooxygenase (364 aa).

The signal sequence occupies residues 1–34; that stretch reads MARRSRYISLAAVMATLLSALGVTFLLGQGRAEA. The Cu cation site is built by His35 and His144. Residues 35 to 225 form the Chitin-binding type-4 domain; sequence HGVAMMPGSR…QENFFSCSDV (191 aa). The tract at residues 234–261 is disordered; sequence VTGIRGSGGTPTPTPTPTTPPTTPPPTH. The segment covering 245-260 has biased composition (pro residues); the sequence is TPTPTPTTPPTTPPPT. The CBM2 domain maps to 258–364; that stretch reads PPTHSGSCMA…PVGTIGCVAP (107 aa).

Cu(2+) is required as a cofactor.

Its subcellular location is the secreted. It catalyses the reaction [(1-&gt;4)-beta-D-glucosyl]n+m + reduced acceptor + O2 = [(1-&gt;4)-beta-D-glucosyl]m-1-(1-&gt;4)-D-glucono-1,5-lactone + [(1-&gt;4)-beta-D-glucosyl]n + acceptor + H2O.. Its pathway is glycan metabolism; cellulose degradation. Involved in the degradation of lignocellulosic biomass. Catalyzes the oxidative cleavage of glycosidic bonds in cellulosic substrates via a copper-dependent mechanism. Degrades phosphoric acid swollen cellulose (PASC) to oxidized cellooligosaccharides with degrees of polymerization of 4-8. Also shows activity on agricultural fiber paper pulps such as flax pulp. Is not active on chitin. In Streptomyces ambofaciens (strain ATCC 23877 / 3486 / DSM 40053 / JCM 4204 / NBRC 12836 / NRRL B-2516), this protein is Lytic cellulose monooxygenase.